Consider the following 909-residue polypeptide: Ribosome-releasing factor 2, mitochondrial (909 aa).

Residues 1-15 (MVAAPLLRAHQAARL) constitute a mitochondrion transit peptide. The tr-type G domain occupies 57–367 (DRTRNIGIIA…AVTNLLPSPP (311 aa)). 66–73 (AHIDAGKT) contributes to the GTP binding site. The segment at 121 to 148 (WPPQTAGDGNTTPQEPQTPRSASSHTVN) is disordered. Over residues 127-148 (GDGNTTPQEPQTPRSASSHTVN) the composition is skewed to polar residues. GTP is bound by residues 151–155 (DTPGH) and 205–208 (NKLD).

Belongs to the TRAFAC class translation factor GTPase superfamily. Classic translation factor GTPase family. EF-G/EF-2 subfamily.

The protein localises to the mitochondrion. Its function is as follows. Mitochondrial GTPase that mediates the disassembly of ribosomes from messenger RNA at the termination of mitochondrial protein biosynthesis. Not involved in the GTP-dependent ribosomal translocation step during translation elongation. This is Ribosome-releasing factor 2, mitochondrial (mef2) from Aspergillus flavus (strain ATCC 200026 / FGSC A1120 / IAM 13836 / NRRL 3357 / JCM 12722 / SRRC 167).